We begin with the raw amino-acid sequence, 72 residues long: Large ribosomal subunit protein bL31c (72 aa).

Belongs to the bacterial ribosomal protein bL31 family. Type A subfamily. As to quaternary structure, part of the 50S ribosomal subunit.

It localises to the plastid. Its subcellular location is the chloroplast. Its function is as follows. Binds the 23S rRNA. This Trieres chinensis (Marine centric diatom) protein is Large ribosomal subunit protein bL31c.